We begin with the raw amino-acid sequence, 415 residues long: Diaminopimelate decarboxylase (415 aa).

Lysine 60 bears the N6-(pyridoxal phosphate)lysine mark. Pyridoxal 5'-phosphate is bound by residues glycine 239 and 274–277 (EPGR). Substrate is bound by residues arginine 277, arginine 313, and tyrosine 317. The Proton donor role is filled by cysteine 344. Glutamate 345 and tyrosine 372 together coordinate substrate. Position 372 (tyrosine 372) interacts with pyridoxal 5'-phosphate.

The protein belongs to the Orn/Lys/Arg decarboxylase class-II family. LysA subfamily. Homodimer. The cofactor is pyridoxal 5'-phosphate.

It catalyses the reaction meso-2,6-diaminopimelate + H(+) = L-lysine + CO2. It participates in amino-acid biosynthesis; L-lysine biosynthesis via DAP pathway; L-lysine from DL-2,6-diaminopimelate: step 1/1. Its function is as follows. Specifically catalyzes the decarboxylation of meso-diaminopimelate (meso-DAP) to L-lysine. In Haemophilus influenzae (strain ATCC 51907 / DSM 11121 / KW20 / Rd), this protein is Diaminopimelate decarboxylase.